A 91-amino-acid chain; its full sequence is Probable Fe(2+)-trafficking protein (91 aa).

Belongs to the Fe(2+)-trafficking protein family.

In terms of biological role, could be a mediator in iron transactions between iron acquisition and iron-requiring processes, such as synthesis and/or repair of Fe-S clusters in biosynthetic enzymes. In Acidobacterium capsulatum (strain ATCC 51196 / DSM 11244 / BCRC 80197 / JCM 7670 / NBRC 15755 / NCIMB 13165 / 161), this protein is Probable Fe(2+)-trafficking protein.